A 194-amino-acid polypeptide reads, in one-letter code: Potassium-transporting ATPase KdpC subunit (194 aa).

Residues 12-34 form a helical membrane-spanning segment; the sequence is LFLLLLTGGVYPLLTTALGQWWF.

Belongs to the KdpC family. As to quaternary structure, the system is composed of three essential subunits: KdpA, KdpB and KdpC.

It is found in the cell inner membrane. Part of the high-affinity ATP-driven potassium transport (or Kdp) system, which catalyzes the hydrolysis of ATP coupled with the electrogenic transport of potassium into the cytoplasm. This subunit acts as a catalytic chaperone that increases the ATP-binding affinity of the ATP-hydrolyzing subunit KdpB by the formation of a transient KdpB/KdpC/ATP ternary complex. The polypeptide is Potassium-transporting ATPase KdpC subunit (Salmonella agona (strain SL483)).